We begin with the raw amino-acid sequence, 97 residues long: Co-chaperonin GroES (97 aa).

Belongs to the GroES chaperonin family. As to quaternary structure, heptamer of 7 subunits arranged in a ring. Interacts with the chaperonin GroEL.

The protein resides in the cytoplasm. In terms of biological role, together with the chaperonin GroEL, plays an essential role in assisting protein folding. The GroEL-GroES system forms a nano-cage that allows encapsulation of the non-native substrate proteins and provides a physical environment optimized to promote and accelerate protein folding. GroES binds to the apical surface of the GroEL ring, thereby capping the opening of the GroEL channel. In Buchnera aphidicola subsp. Geoica urticularia, this protein is Co-chaperonin GroES.